Consider the following 209-residue polypeptide: uncharacterized protein (209 aa).

Residues 1–17 (MKRLVTGLLALSLFLAA) form the signal peptide. A disordered region spans residues 17-105 (ACGQDSDQQK…SNNQANNNQK (89 aa)). Cys18 is lipidated: N-palmitoyl cysteine. Cys18 is lipidated: S-diacylglycerol cysteine. A compositionally biased stretch (basic and acidic residues) spans 23–70 (DQQKDGNKEKDDKAKTEQQDKKTNDSSKDKKDNKDDSKDVNKDNKDNS). Over residues 71 to 105 (ANDNQQQSNSNATNNDQNQTNNNQSSNNQANNNQK) the composition is skewed to low complexity.

It is found in the cell membrane. This is an uncharacterized protein from Staphylococcus aureus (strain COL).